Here is a 484-residue protein sequence, read N- to C-terminus: Coronin-1B (484 aa).

Position 2 is a phosphoserine (S2). 5 WD repeats span residues 80-120, 130-170, 174-213, 217-260, and 265-305; these read GHTG…LTSP, GHTK…ELYR, LHPD…LVAE, AHEG…EPMA, and DSSN…PYIH. Positions 447 to 481 form a coiled coil; sequence KLEEVMHGLRALRVLVKEQGERISRLEEHLGRMEN.

Belongs to the WD repeat coronin family. In terms of assembly, forms homooligomers, but does not form complexes with the other coronins. Interacts with Arp2/3 complex components, including ACTR2, ARPC1B and ARPC2. Binds actin. Post-translationally, phosphorylation on Ser-2 regulates the interaction with the Arp2/3 complex and cell motility in fibroblasts. Phosphorylation does not seem to affect subcellular location.

The protein localises to the cytoplasm. Its subcellular location is the cytoskeleton. The protein resides in the stress fiber. Regulates leading edge dynamics and cell motility in fibroblasts. May be involved in cytokinesis and signal transduction. The protein is Coronin-1B (Coro1b) of Rattus norvegicus (Rat).